We begin with the raw amino-acid sequence, 428 residues long: Serine--tRNA ligase (428 aa).

Position 231–233 (231–233 (TSE)) interacts with L-serine. ATP is bound by residues 262-264 (RRE) and V278. E285 contributes to the L-serine binding site. 349 to 352 (ELTS) provides a ligand contact to ATP. Residue T384 coordinates L-serine.

It belongs to the class-II aminoacyl-tRNA synthetase family. Type-1 seryl-tRNA synthetase subfamily. In terms of assembly, homodimer. The tRNA molecule binds across the dimer.

It is found in the cytoplasm. It carries out the reaction tRNA(Ser) + L-serine + ATP = L-seryl-tRNA(Ser) + AMP + diphosphate + H(+). It catalyses the reaction tRNA(Sec) + L-serine + ATP = L-seryl-tRNA(Sec) + AMP + diphosphate + H(+). It functions in the pathway aminoacyl-tRNA biosynthesis; selenocysteinyl-tRNA(Sec) biosynthesis; L-seryl-tRNA(Sec) from L-serine and tRNA(Sec): step 1/1. Its function is as follows. Catalyzes the attachment of serine to tRNA(Ser). Is also able to aminoacylate tRNA(Sec) with serine, to form the misacylated tRNA L-seryl-tRNA(Sec), which will be further converted into selenocysteinyl-tRNA(Sec). The polypeptide is Serine--tRNA ligase (Bifidobacterium longum (strain NCC 2705)).